A 217-amino-acid polypeptide reads, in one-letter code: Acyl-homoserine-lactone synthase (217 aa).

It belongs to the autoinducer synthase family.

The catalysed reaction is a fatty acyl-[ACP] + S-adenosyl-L-methionine = an N-acyl-L-homoserine lactone + S-methyl-5'-thioadenosine + holo-[ACP] + H(+). In terms of biological role, required for the synthesis of OHHL (N-(3-oxohexanoyl)-L-homoserine lactone), an autoinducer molecule which binds to ExpR and thus acts in virulence (soft rot disease) through the activation of genes for plant tissue macerating enzymes. The chain is Acyl-homoserine-lactone synthase (expI) from Pectobacterium parmentieri.